Reading from the N-terminus, the 127-residue chain is Fluoride-specific ion channel FluC (127 aa).

Helical transmembrane passes span 4–24 (LDYLTIAFGGAIGAVLRYLVS), 39–59 (GTIIVNSVGSFFLSFLMFAAI), 68–88 (AILFFGTGLLGAFTTFSTFTY), and 102–122 (VAYALANLLFAFTCAYFGMIL). Residues Gly78 and Thr81 each coordinate Na(+).

Belongs to the fluoride channel Fluc/FEX (TC 1.A.43) family.

The protein resides in the cell inner membrane. It carries out the reaction fluoride(in) = fluoride(out). With respect to regulation, na(+) is not transported, but it plays an essential structural role and its presence is essential for fluoride channel function. Functionally, fluoride-specific ion channel. Important for reducing fluoride concentration in the cell, thus reducing its toxicity. This is Fluoride-specific ion channel FluC from Thermotoga maritima (strain ATCC 43589 / DSM 3109 / JCM 10099 / NBRC 100826 / MSB8).